A 447-amino-acid polypeptide reads, in one-letter code: Argininosuccinate synthase (447 aa).

ATP contacts are provided by residues 17–25 and Ala43; that span reads AFSGGLDTS. Tyr99 is a binding site for L-citrulline. 2 residues coordinate ATP: Gly129 and Thr131. Residues Thr131, Asn135, and Asp136 each contribute to the L-aspartate site. Asn135 is a binding site for L-citrulline. Asp136 is a binding site for ATP. Arg139 and Ser192 together coordinate L-citrulline. Residue Asp194 participates in ATP binding. L-citrulline contacts are provided by Thr201, Glu203, and Glu280.

The protein belongs to the argininosuccinate synthase family. Type 2 subfamily. In terms of assembly, homotetramer.

The protein resides in the cytoplasm. The catalysed reaction is L-citrulline + L-aspartate + ATP = 2-(N(omega)-L-arginino)succinate + AMP + diphosphate + H(+). The protein operates within amino-acid biosynthesis; L-arginine biosynthesis; L-arginine from L-ornithine and carbamoyl phosphate: step 2/3. The polypeptide is Argininosuccinate synthase (Salmonella newport (strain SL254)).